We begin with the raw amino-acid sequence, 1258 residues long: MNYIPTQTFYGRRWRPRPAARPWVAPPPVYYPPPPPVPVDPQAQQMQQLIAAVNTLAIRQNGTRTPGQQRRKRQPNKPKRKQTPPKKQNPAKTKNKQKPQPPKPKKRKPGKRERKCMKIENDCIFEVKLEGKVTGYACLVGDKVMKPAHVKGVIDNPDLAKLAFKKSSKYDLECAQIPVHMKSDASQFTHEKPEGHYNWHHGAVQYLNGRFTIPTGAGKPGDSGRPIFDNKGRVVAIVLGGANEGARTALSVVTWNKDMVTRITPEGTEEWTALVTTACILSNLTFDCSLPPCAPCCYEKDAEGTLRMLEDNVDNPGYYDLLAASTHCDAPQRRRRRGLTEDYKAYKLTKPYIAYCSDCGNGQFCYSPIAIERVRAEASDGMLKIQISAQIGLQVDGAHSWTKIRYMKGHDVEDTDRNSLEVFTTGECTVHGTMGHFIVATCPEGDSLTVAFVDKHKVRHACRIAYKHRVPVLGREHFTVRPHHGVELPCTTYAMRTSVTTEEIEMHVAHDVPDNTFLSKTGNKVKITPKGKSIRYNCTCGSKESGVTKQDKEFDNCEVSQCHTMVTAHDKWQFNSPYVPRAGSGKKGKIHVPFPLSNSTCRVPLAPLPNTIPAKNGITLQLHPVAPTLLTYRTLGEKPEHHTEWISESCERTLPVPEEGLEYTWGNHAPVRLWAQLTTKGSAHGMPHEIFSYYYGLYPATTVAVCVGLACVILLALSASCCLCVSARNKCLTPYALTPGAVVPCTLSLLCCAPRAKAATFAETAAYLWAENQTVFWMQFAIPVACFMIVTYCLRHLMLCCRTASFLVAVSLGMGATQAYEHSVTLPNAVGFPYRAHVDRPGFSPLTLHMEVVSTSLEPTLALDYVTCEYKTVVPSPKVTCCGMSECAHQQKADFQCKVYTGVYPFLWGGAYCFCDSENTQLSEAYVERSEVCKHDHAAAYRAHTAALKAKISVTYGSTNGTAEAFVNGESTARIGDLKMILGPISTAWSPFDPKIVVYKDEVYNQDYPPYGSGQPGRFGDLQSRTTESNDVYANTALKLARPSAGTVHVPYTQTPSGFKYWLKEKGDALNHKAPFGCIIKTNPVRAENCAVGNIPVSLDIPDAAFTRIVDAPSLTGLKCEVATCTHSSDFGGTLVVEYKTDKVGTCAVHSESNTAVMQETSLSVTMDGRGTLHFSTASASPSFVLKVCSSKTTCTAKCVPPKDHVVPFPANHNNVVFPDFSSTAVSWLTHTMGGATVVIAIGITIFLIVTCIAFSRH.

A host transcription inhibition region spans residues 41 to 75 (PQAQQMQQLIAAVNTLAIRQNGTRTPGQQRRKRQP). Residues 59–114 (RQNGTRTPGQQRRKRQPNKPKRKQTPPKKQNPAKTKNKQKPQPPKPKKRKPGKRER) are disordered. The Nuclear localization signal signature appears at 68–109 (QQRRKRQPNKPKRKQTPPKKQNPAKTKNKQKPQPPKPKKRKP). Basic residues-rich tracts occupy residues 69–84 (QRRK…KQTP) and 93–114 (TKNK…KRER). The segment at 96-124 (KQKPQPPKPKKRKPGKRERKCMKIENDCI) is binding to the viral RNA. The ribosome-binding stretch occupies residues 109–123 (PGKRERKCMKIENDC). An intrachain disulfide couples C123 to C138. Residues 123-271 (CIFEVKLEGK…RITPEGTEEW (149 aa)) form the Peptidase S3 domain. H149 functions as the Charge relay system in the catalytic mechanism. The short motif at 154 to 164 (IDNPDLAKLAF) is the Nuclear export signal element. Residues 165-170 (KKSSKY) are interaction with spike glycoprotein E2. D171 functions as the Charge relay system in the catalytic mechanism. Residues 193 to 203 (PEGHYNWHHGA) form a dimerization of the capsid protein region. S223 acts as the Charge relay system in catalysis. The dimerization of the capsid protein stretch occupies residues 229–233 (DNKGR). The segment at 272-284 (TALVTTACILSNL) is functions as an uncleaved signal peptide for the precursor of protein E3/E2. Intrachain disulfides connect C279-C288, C293-C297, C296-C328, C356-C462, C359-C365, C428-C442, C490-C601, C538-C562, and C540-C557. N-linked (GlcNAc...) asparagine; by host glycosylation occurs at N283. Over 338–696 (GLTEDYKAYK…PHEIFSYYYG (359 aa)) the chain is Extracellular. 2 interaction with host Mxra8 receptor regions span residues 363–366 (QFCY) and 399–401 (HSW). Residues 521–524 (TGNK) form an interaction with host Mxra8 receptor region. The N-linked (GlcNAc...) asparagine; by host glycan is linked to N537. An interaction with host Mxra8 receptor region spans residues 553-559 (EFDNCEV). N-linked (GlcNAc...) asparagine; by host glycosylation occurs at N598. The chain crosses the membrane as a helical span at residues 697–717 (LYPATTVAVCVGLACVILLAL). At 718 to 758 (SASCCLCVSARNKCLTPYALTPGAVVPCTLSLLCCAPRAKA) the chain is on the cytoplasmic side. The tract at residues 726-730 (SARNK) is interaction with the capsid protein. 3 S-palmitoyl cysteine; by host lipidation sites follow: C731, C751, and C752. Residues 731–751 (CLTPYALTPGAVVPCTLSLLC) form a transient transmembrane before p62-6K protein processing region. Cysteines 731 and 752 form a disulfide. Topologically, residues 759 to 773 (ATFAETAAYLWAENQ) are extracellular. A helical membrane pass occupies residues 774–794 (TVFWMQFAIPVACFMIVTYCL). At 795-796 (RH) the chain is on the cytoplasmic side. A helical transmembrane segment spans residues 797 to 817 (LMLCCRTASFLVAVSLGMGAT). Extracellular-facing segments span residues 818–819 (QA) and 820–1234 (YEHS…HTMG). 4 cysteine pairs are disulfide-bonded: C868/C933, C881/C913, C882/C915, and C887/C897. The E1 fusion peptide loop stretch occupies residues 903–920 (VYPFLWGGAYCFCDSENT). N960 and N1089 each carry an N-linked (GlcNAc...) asparagine; by host glycan. Intrachain disulfides connect C1078–C1090, C1120–C1195, C1125–C1199, and C1147–C1189. A helical membrane pass occupies residues 1235–1255 (GATVVIAIGITIFLIVTCIAF). C1252 carries S-palmitoyl cysteine; by host lipidation. Residues 1256-1258 (SRH) are Cytoplasmic-facing.

In terms of assembly, homodimer. Homomultimer. Interacts with host karyopherin KPNA4; this interaction allows the nuclear import of the viral capsid protein. Interacts with spike glycoprotein E2. Interacts with host IRAK1; the interaction leads to inhibition of IRAK1-dependent signaling. The precursor of protein E3/E2 and E1 form a heterodimer shortly after synthesis. As to quaternary structure, the precursor of protein E3/E2 and E1 form a heterodimer shortly after synthesis. Processing of the precursor of protein E3/E2 into E2 and E3 results in a heterodimer of the spike glycoproteins E2 and E1. Spike at virion surface are constituted of a trimer of E2-E1 heterodimers. After target cell attachment and endocytosis, E1 change conformation to form homotrimers. Interacts with 6K protein. In terms of assembly, interacts with spike glycoprotein E1. Processing of the precursor of protein E3/E2 into E2 and E3 results in a heterodimer of the spike glycoproteins E2 and E1. Spike at virion surface are constituted of a trimer of E2-E1 heterodimers. Interacts with 6K protein. Interacts with host MXRA8; this interaction mediates virus entry. Oligomer. Interacts with spike glycoprotein E1. Interacts with spike glycoprotein E2. Structural polyprotein: Specific enzymatic cleavages in vivo yield mature proteins. Capsid protein is auto-cleaved during polyprotein translation, unmasking a signal peptide at the N-terminus of the precursor of E3/E2. The remaining polyprotein is then targeted to the host endoplasmic reticulum, where host signal peptidase cleaves it into pE2, 6K and E1 proteins. pE2 is further processed to mature E3 and E2 by host furin in trans-Golgi vesicle. In terms of processing, palmitoylated via thioester bonds. These palmitoylations may induce disruption of the C-terminus transmembrane. This would result in the reorientation of E2 C-terminus from lumenal to cytoplasmic side. Post-translationally, N-glycosylated. Palmitoylated via thioester bonds.

The protein resides in the virion. It localises to the host cytoplasm. It is found in the host cell membrane. Its subcellular location is the host nucleus. The protein localises to the virion membrane. The protein resides in the host Golgi apparatus. It localises to the host trans-Golgi network. It is found in the host endoplasmic reticulum. The catalysed reaction is Autocatalytic release of the core protein from the N-terminus of the togavirus structural polyprotein by hydrolysis of a -Trp-|-Ser- bond.. Its function is as follows. Forms an icosahedral capsid with a T=4 symmetry composed of 240 copies of the capsid protein surrounded by a lipid membrane through which penetrate 80 spikes composed of trimers of E1-E2 heterodimers. The capsid protein binds to the viral RNA genome at a site adjacent to a ribosome binding site for viral genome translation following genome release. Possesses a protease activity that results in its autocatalytic cleavage from the nascent structural protein. Following its self-cleavage, the capsid protein transiently associates with ribosomes, and within several minutes the protein binds to viral RNA and rapidly assembles into icosahedric core particles. The resulting nucleocapsid eventually associates with the cytoplasmic domain of the spike glycoprotein E2 at the cell membrane, leading to budding and formation of mature virions. In case of infection, new virions attach to target cells and after clathrin-mediated endocytosis their membrane fuses with the host endosomal membrane. This leads to the release of the nucleocapsid into the cytoplasm, followed by an uncoating event necessary for the genomic RNA to become accessible. The uncoating might be triggered by the interaction of capsid proteins with ribosomes. Binding of ribosomes would release the genomic RNA since the same region is genomic RNA-binding and ribosome-binding. Specifically inhibits interleukin-1 receptor-associated kinase 1/IRAK1-dependent signaling during viral entry, representing a means by which the alphaviruses may evade innate immune detection and activation prior to viral gene expression. Provides the signal sequence for the translocation of the precursor of protein E3/E2 to the host endoplasmic reticulum. Furin-cleaved E3 remains associated with spike glycoprotein E1 and mediates pH protection of the latter during the transport via the secretory pathway. After virion release from the host cell, the assembly protein E3 is gradually released in the extracellular space. Functionally, plays a role in viral attachment to target host cell, by binding to the cell receptor MXRA8. Synthesized as a p62 precursor which is processed by furin at the cell membrane just before virion budding, giving rise to E2-E1 heterodimer. The p62-E1 heterodimer is stable, whereas E2-E1 is unstable and dissociate at low pH. p62 is processed at the last step, presumably to avoid E1 fusion activation before its final export to cell surface. E2 C-terminus contains a transitory transmembrane that would be disrupted by palmitoylation, resulting in reorientation of the C-terminal tail from lumenal to cytoplasmic side. This step is critical since E2 C-terminus is involved in budding by interacting with capsid proteins. This release of E2 C-terminus in cytoplasm occurs lately in protein export, and precludes premature assembly of particles at the endoplasmic reticulum membrane. In terms of biological role, acts as a viroporin that participates in virus glycoprotein processing and transport to the plasma membrane, cell permeabilization and budding of viral particles. Disrupts the calcium homeostasis of the cell, probably at the endoplasmic reticulum level. This leads to cytoplasmic calcium elevation. Because of its lipophilic properties, the 6K protein is postulated to influence the selection of lipids that interact with the transmembrane domains of the glycoproteins, which, in turn, affects the deformability of the bilayer required for the extreme curvature that occurs as budding proceeds. Present in low amount in virions, about 3% compared to viral glycoproteins. Its function is as follows. Class II viral fusion protein. Fusion activity is inactive as long as E1 is bound to E2 in mature virion. After virus attachment to target cell and endocytosis, acidification of the endosome induce dissociation of E1/E2 heterodimer and concomitant trimerization of the E1 subunits. This E1 trimer is fusion active, and promotes release of viral nucleocapsid in cytoplasm after endosome and viral membrane fusion. Efficient fusion requires the presence of cholesterol and sphingolipid in the target membrane. The polypeptide is Structural polyprotein (Middelburg virus).